Here is a 37-residue protein sequence, read N- to C-terminus: Dolichyl-diphosphooligosaccharide--protein glycosyltransferase subunit 4A (37 aa).

Residues 1 to 7 (MIDDQDL) lie on the Lumenal side of the membrane. Residues 8–28 (GFIANFLGIFIFALVIAYHYV) traverse the membrane as a helical segment. Over 29-37 (TADPKYEAT) the chain is Cytoplasmic.

It belongs to the OST4 family. As to quaternary structure, component of the oligosaccharyltransferase (OST) complex.

The protein localises to the endoplasmic reticulum membrane. Its function is as follows. Subunit of the oligosaccharyl transferase (OST) complex that catalyzes the initial transfer of a defined glycan (Glc(3)Man(9)GlcNAc(2) in eukaryotes) from the lipid carrier dolichol-pyrophosphate to an asparagine residue within an Asn-X-Ser/Thr consensus motif in nascent polypeptide chains, the first step in protein N-glycosylation. N-glycosylation occurs cotranslationally and the complex associates with the Sec61 complex at the channel-forming translocon complex that mediates protein translocation across the endoplasmic reticulum (ER). All subunits are required for a maximal enzyme activity. The sequence is that of Dolichyl-diphosphooligosaccharide--protein glycosyltransferase subunit 4A (OST4A) from Arabidopsis thaliana (Mouse-ear cress).